Here is a 118-residue protein sequence, read N- to C-terminus: UPF0102 protein lpp3065 (118 aa).

The protein belongs to the UPF0102 family.

The chain is UPF0102 protein lpp3065 from Legionella pneumophila (strain Paris).